Here is a 98-residue protein sequence, read N- to C-terminus: MEKHPADLYKDHVRPFLYSKLEEFKILGYDDVELESLWSYLTDKKWKKKTELSIYELASDILSVKIGEFMNYATVESFKTSNWLGSEEGQEALEELLR.

In terms of assembly, interacts directly with DivIVA.

It is found in the cytoplasm. In terms of biological role, required for post-transcription initiation control of the comE operon. Promotes the accumulation of its target comE mRNA to septal and polar sites. This chain is Post-transcriptional regulator ComN (comN), found in Bacillus subtilis (strain 168).